The sequence spans 966 residues: RNA polymerase-associated protein RapA (966 aa).

The Helicase ATP-binding domain maps to 163–337 (EVGRRIAPRV…FARLHLLDPN (175 aa)). Residue 176 to 183 (DEVGLGKT) participates in ATP binding. Residues 283-286 (DEAH) carry the DEAH box motif. Positions 489–643 (RVDWLINLVK…TCPMGAILHE (155 aa)) constitute a Helicase C-terminal domain.

This sequence belongs to the SNF2/RAD54 helicase family. RapA subfamily. In terms of assembly, interacts with the RNAP. Has a higher affinity for the core RNAP than for the holoenzyme. Its ATPase activity is stimulated by binding to RNAP.

Transcription regulator that activates transcription by stimulating RNA polymerase (RNAP) recycling in case of stress conditions such as supercoiled DNA or high salt concentrations. Probably acts by releasing the RNAP, when it is trapped or immobilized on tightly supercoiled DNA. Does not activate transcription on linear DNA. Probably not involved in DNA repair. The chain is RNA polymerase-associated protein RapA from Histophilus somni (strain 129Pt) (Haemophilus somnus).